The chain runs to 340 residues: Coproporphyrin III ferrochelatase (340 aa).

Fe-coproporphyrin III is bound by residues serine 52 and tyrosine 116. 2 residues coordinate Fe(2+): histidine 172 and glutamate 255.

The protein belongs to the ferrochelatase family.

The protein resides in the cytoplasm. It catalyses the reaction Fe-coproporphyrin III + 2 H(+) = coproporphyrin III + Fe(2+). It functions in the pathway porphyrin-containing compound metabolism; protoheme biosynthesis. Functionally, involved in coproporphyrin-dependent heme b biosynthesis. Catalyzes the insertion of ferrous iron into coproporphyrin III to form Fe-coproporphyrin III. This Mycobacterium ulcerans (strain Agy99) protein is Coproporphyrin III ferrochelatase.